The following is a 127-amino-acid chain: Major sperm protein isoform alpha (127 aa).

Alanine 2 is subject to N-acetylalanine. The 118-residue stretch at 9 to 126 (DINTQPSQKI…RRKNLPIEYN (118 aa)) folds into the MSP domain.

Forms filaments 10 nm wide, with a characteristic substructure repeating axially at 9 nm. In terms of tissue distribution, sperm.

Its subcellular location is the cell projection. It localises to the pseudopodium. The protein resides in the cytoplasm. It is found in the cytoskeleton. Functionally, central component in molecular interactions underlying sperm crawling. Forms an extensive filament system that extends from sperm villipoda, along the leading edge of the pseudopod. The polypeptide is Major sperm protein isoform alpha (Ascaris suum (Pig roundworm)).